We begin with the raw amino-acid sequence, 141 residues long: Nucleoside diphosphate kinase (141 aa).

ATP is bound by residues lysine 11, phenylalanine 59, arginine 87, threonine 93, arginine 104, and asparagine 114. Histidine 117 functions as the Pros-phosphohistidine intermediate in the catalytic mechanism.

Belongs to the NDK family. In terms of assembly, homotetramer. Mg(2+) is required as a cofactor.

It localises to the cytoplasm. It catalyses the reaction a 2'-deoxyribonucleoside 5'-diphosphate + ATP = a 2'-deoxyribonucleoside 5'-triphosphate + ADP. It carries out the reaction a ribonucleoside 5'-diphosphate + ATP = a ribonucleoside 5'-triphosphate + ADP. Its function is as follows. Major role in the synthesis of nucleoside triphosphates other than ATP. The ATP gamma phosphate is transferred to the NDP beta phosphate via a ping-pong mechanism, using a phosphorylated active-site intermediate. The chain is Nucleoside diphosphate kinase from Paraburkholderia xenovorans (strain LB400).